A 376-amino-acid polypeptide reads, in one-letter code: MLSVPASSRIDFAGSPRPTVGVEWEFALVDAHTRDLSNEAATVIAEIGETPHVHKELLRNTVEVVTGICENTGEAMADLHDTLQVVRRIVRDRGMELFCAGTHPFANWSTQQLTDAPRYAELIKRTQWWGRQMLIWGVHVHVGISSAHKVMPIISSLLNQYPHLLALSASSPYWDGSDTGYASNRAMMFQQLPTAGLPFQFQSWPEFERFVHDQKKTGIIDHMNEIRWDIRPSPHLGTVEIRVFDGVSNIAELGSLVALTHCLVVDLDRRLDAGEQLPVMPPWHVQENKWRAARYGLDAEIILDADSNERLVTEDLDDLLTRLQPVARSLDCADELAGVAEIYRHGASYQRQRRVAEEHDGDLLAVVDALVAELEL.

The protein belongs to the glutamate--cysteine ligase type 2 family. YbdK subfamily.

It carries out the reaction L-cysteine + L-glutamate + ATP = gamma-L-glutamyl-L-cysteine + ADP + phosphate + H(+). Functionally, ATP-dependent carboxylate-amine ligase which exhibits weak glutamate--cysteine ligase activity. In Mycobacterium sp. (strain JLS), this protein is Putative glutamate--cysteine ligase 2-1.